A 253-amino-acid chain; its full sequence is Phycoerythrobilin:ferredoxin oxidoreductase (253 aa).

This sequence belongs to the HY2 family.

It carries out the reaction (3Z)-phycoerythrobilin + oxidized 2[4Fe-4S]-[ferredoxin] = 15,16-dihydrobiliverdin + reduced 2[4Fe-4S]-[ferredoxin] + 2 H(+). In terms of biological role, catalyzes the two-electron reduction of the C2 and C3(1) diene system of 15,16-dihydrobiliverdin. This is Phycoerythrobilin:ferredoxin oxidoreductase from Prochlorococcus marinus (strain MIT 9312).